A 230-amino-acid chain; its full sequence is Oxygen-evolving enhancer protein 3-2, chloroplastic (230 aa).

Residues 1–49 constitute a chloroplast transit peptide; sequence MAQAVTSMAGLRGASQAVLEGSLQINGSNRLNISRVSVGSQRTGLVIRA. The N-terminal 33 residues, 50–82, are a transit peptide targeting the thylakoid; it reads QQNVSVPESSRRSVIGLVAAGLAGGSFVKAVFA. The residue at position 125 (S125) is a Phosphoserine. T195 carries the phosphothreonine modification. A Phosphotyrosine modification is found at Y215. A Phosphoserine modification is found at S216. T218 carries the phosphothreonine modification.

This sequence belongs to the PsbQ family.

Its subcellular location is the plastid. The protein resides in the chloroplast thylakoid membrane. Required for photosystem II assembly/stability and photoautotrophic growth under low light conditions. The polypeptide is Oxygen-evolving enhancer protein 3-2, chloroplastic (PSBQ2) (Arabidopsis thaliana (Mouse-ear cress)).